We begin with the raw amino-acid sequence, 353 residues long: Peptide methionine sulfoxide reductase MsrA/MsrB (353 aa).

The interval 43–196 (REIYLAGGCF…PNGYCHIDIT (154 aa)) is peptide methionine sulfoxide reductase A. Residue Cys-51 is part of the active site. Residues 213–336 (DAELKAKLTP…NSASIKFIPL (124 aa)) form the MsrB domain. Cys-325 acts as the Nucleophile in catalysis.

It in the N-terminal section; belongs to the MsrA Met sulfoxide reductase family. The protein in the C-terminal section; belongs to the MsrB Met sulfoxide reductase family.

The catalysed reaction is L-methionyl-[protein] + [thioredoxin]-disulfide + H2O = L-methionyl-(S)-S-oxide-[protein] + [thioredoxin]-dithiol. It catalyses the reaction [thioredoxin]-disulfide + L-methionine + H2O = L-methionine (S)-S-oxide + [thioredoxin]-dithiol. The enzyme catalyses L-methionyl-[protein] + [thioredoxin]-disulfide + H2O = L-methionyl-(R)-S-oxide-[protein] + [thioredoxin]-dithiol. Has an important function as a repair enzyme for proteins that have been inactivated by oxidation. Catalyzes the reversible oxidation-reduction of methionine sulfoxide in proteins to methionine. The protein is Peptide methionine sulfoxide reductase MsrA/MsrB (msrAB) of Haemophilus influenzae (strain ATCC 51907 / DSM 11121 / KW20 / Rd).